A 122-amino-acid polypeptide reads, in one-letter code: Large ribosomal subunit protein uL14 (122 aa).

It belongs to the universal ribosomal protein uL14 family. Part of the 50S ribosomal subunit. Forms a cluster with proteins L3 and L19. In the 70S ribosome, L14 and L19 interact and together make contacts with the 16S rRNA in bridges B5 and B8.

Binds to 23S rRNA. Forms part of two intersubunit bridges in the 70S ribosome. The sequence is that of Large ribosomal subunit protein uL14 from Vesicomyosocius okutanii subsp. Calyptogena okutanii (strain HA).